The primary structure comprises 118 residues: Large ribosomal subunit protein bL19 (118 aa).

Belongs to the bacterial ribosomal protein bL19 family.

In terms of biological role, this protein is located at the 30S-50S ribosomal subunit interface and may play a role in the structure and function of the aminoacyl-tRNA binding site. The protein is Large ribosomal subunit protein bL19 of Campylobacter lari (strain RM2100 / D67 / ATCC BAA-1060).